We begin with the raw amino-acid sequence, 431 residues long: Phosphoribosylamine--glycine ligase (431 aa).

The ATP-grasp domain maps to 107–315 (RWLMEEYKIP…LVEIGEEIVD (209 aa)). Residue 134-193 (IDDFGRPVVVKPLGLTGGKGVKVVGYQLKDNEEAKAYAEELIKRDGKVLIEERTDGVEFT) participates in ATP binding. The Mg(2+) site is built by glutamine 273, glutamate 285, and asparagine 287. 3 residues coordinate Mn(2+): glutamine 273, glutamate 285, and asparagine 287.

The protein belongs to the GARS family. Mg(2+) serves as cofactor. Mn(2+) is required as a cofactor.

It catalyses the reaction 5-phospho-beta-D-ribosylamine + glycine + ATP = N(1)-(5-phospho-beta-D-ribosyl)glycinamide + ADP + phosphate + H(+). The protein operates within purine metabolism; IMP biosynthesis via de novo pathway; N(1)-(5-phospho-D-ribosyl)glycinamide from 5-phospho-alpha-D-ribose 1-diphosphate: step 2/2. In Thermococcus kodakarensis (strain ATCC BAA-918 / JCM 12380 / KOD1) (Pyrococcus kodakaraensis (strain KOD1)), this protein is Phosphoribosylamine--glycine ligase.